Here is a 300-residue protein sequence, read N- to C-terminus: 4-hydroxy-tetrahydrodipicolinate synthase (300 aa).

Position 45 (Thr-45) interacts with pyruvate. The active-site Proton donor/acceptor is the Tyr-140. Catalysis depends on Lys-169, which acts as the Schiff-base intermediate with substrate. Residue Val-210 participates in pyruvate binding.

It belongs to the DapA family. Homotetramer; dimer of dimers.

Its subcellular location is the cytoplasm. It carries out the reaction L-aspartate 4-semialdehyde + pyruvate = (2S,4S)-4-hydroxy-2,3,4,5-tetrahydrodipicolinate + H2O + H(+). The protein operates within amino-acid biosynthesis; L-lysine biosynthesis via DAP pathway; (S)-tetrahydrodipicolinate from L-aspartate: step 3/4. Catalyzes the condensation of (S)-aspartate-beta-semialdehyde [(S)-ASA] and pyruvate to 4-hydroxy-tetrahydrodipicolinate (HTPA). This is 4-hydroxy-tetrahydrodipicolinate synthase from Helicobacter acinonychis (strain Sheeba).